The chain runs to 253 residues: HTH-type transcriptional regulator AdiY (253 aa).

One can recognise an HTH araC/xylS-type domain in the interval 149 to 246 (DSVYQIIESD…GMTPLHYVSQ (98 aa)). DNA-binding regions (H-T-H motif) lie at residues 166–187 (SMVASCLCLSPSLLKKKLKSEN) and 213–236 (ISQVSQSCGYNSTSYFISVFKDFY).

The polypeptide is HTH-type transcriptional regulator AdiY (adiY) (Escherichia coli (strain K12)).